Consider the following 150-residue polypeptide: U1 small nuclear ribonucleoprotein C (150 aa).

Residues 4–36 (YYCDYCKSYLTHDTMSVRKSHLQGRNHIKFYCD) form a Matrin-type zinc finger. Residues 66 to 132 (SDAKKSNGSS…GLPLPPPAVY (67 aa)) form a disordered region. Over residues 80 to 92 (DIDKKENSSDHNK) the composition is skewed to basic and acidic residues. Residues 103-112 (NDNDDDDDEM) are compositionally biased toward acidic residues. Residues 115–130 (LPPPPNLSGLPLPPPA) show a composition bias toward pro residues.

Belongs to the U1 small nuclear ribonucleoprotein C family. In terms of assembly, U1 snRNP is composed of the 7 core Sm proteins B/B', D1, D2, D3, E, F and G that assemble in a heptameric protein ring on the Sm site of the small nuclear RNA to form the core snRNP, and at least 3 U1 snRNP-specific proteins U1-70K, U1-A and U1-C. U1-C interacts with U1 snRNA and the 5' splice-site region of the pre-mRNA.

The protein localises to the nucleus. Functionally, component of the spliceosomal U1 snRNP, which is essential for recognition of the pre-mRNA 5' splice-site and the subsequent assembly of the spliceosome. U1-C is directly involved in initial 5' splice-site recognition for both constitutive and regulated alternative splicing. The interaction with the 5' splice-site seems to precede base-pairing between the pre-mRNA and the U1 snRNA. Stimulates commitment or early (E) complex formation by stabilizing the base pairing of the 5' end of the U1 snRNA and the 5' splice-site region. The sequence is that of U1 small nuclear ribonucleoprotein C from Candida albicans (strain SC5314 / ATCC MYA-2876) (Yeast).